The chain runs to 318 residues: Olfactory receptor 51E1 (318 aa).

At 1–31 (MMVDPNGNESSATYFILIGLPGLEEAQFWLA) the chain is on the extracellular side. The N-linked (GlcNAc...) asparagine glycan is linked to Asn-8. The helical transmembrane segment at 32–52 (FPLCSLYLIAVLGNLTIIYIV) threads the bilayer. Residues 53 to 60 (RTEHSLHE) lie on the Cytoplasmic side of the membrane. The chain crosses the membrane as a helical span at residues 61-81 (PMYIFLCMLSGIDILISTSSM). The Extracellular segment spans residues 82 to 100 (PKMLAIFWFNSTTIQFDAC). N-linked (GlcNAc...) asparagine glycosylation is present at Asn-91. Residues Cys-100 and Cys-182 are joined by a disulfide bond. Residues 101–123 (LLQMFAIHSLSGMESTVLLAMAF) traverse the membrane as a helical segment. At 124–145 (DRYVAICHPLRHATVLTLPRVT) the chain is on the cytoplasmic side. A helical transmembrane segment spans residues 146-166 (KIGVAAVVRGAALMAPLPVFI). Topologically, residues 167–198 (KQLPFCRSNILSHSYCLHQDVMKLACDDIRVN) are extracellular. Residues 199-219 (VVYGLIVIISAIGLDSLLISF) form a helical membrane-spanning segment. Topologically, residues 220 to 239 (SYLLILKTVLGLTREAQAKA) are cytoplasmic. Residues 240–260 (FGTCVSHVCAVFIFYVPFIGL) form a helical membrane-spanning segment. Residues 261–275 (SMVHRFSKRRDSPLP) lie on the Extracellular side of the membrane. A helical transmembrane segment spans residues 276 to 296 (VILANIYLLVPPVLNPIVYGV). Over 297–318 (KTKEIRQRILRLFHVATHASEP) the chain is Cytoplasmic.

Belongs to the G-protein coupled receptor 1 family. Highly expressed in prostate. Very low levels may be detected in some other tissues, such as placenta, skeletal muscle, heart, ovary and testis. Up-regulated in prostate cancers.

It localises to the cell membrane. In terms of biological role, odorant receptor. The chain is Olfactory receptor 51E1 (OR51E1) from Homo sapiens (Human).